Consider the following 87-residue polypeptide: Small ribosomal subunit protein uS17 (87 aa).

The protein belongs to the universal ribosomal protein uS17 family. As to quaternary structure, part of the 30S ribosomal subunit.

One of the primary rRNA binding proteins, it binds specifically to the 5'-end of 16S ribosomal RNA. In Geobacillus thermodenitrificans (strain NG80-2), this protein is Small ribosomal subunit protein uS17.